The following is a 169-amino-acid chain: Allophycocyanin subunit beta-18 (169 aa).

Asn72 carries the post-translational modification N4-methylasparagine. Residue Cys82 participates in (2R,3E)-phycocyanobilin binding.

Belongs to the phycobiliprotein family. As to quaternary structure, heterodimer of ApcE and this beta chain. Contains one covalently linked bilin chromophore.

It localises to the cellular thylakoid membrane. Functionally, a variant beta-allophycocyanin (AP) which forms a complex with ApcE, a phycobilisome terminal emitter that influences energy transfer to photosystem II. This is Allophycocyanin subunit beta-18 (apcF) from Synechocystis sp. (strain ATCC 27184 / PCC 6803 / Kazusa).